The chain runs to 406 residues: LIM/homeobox protein Lhx1 (406 aa).

2 consecutive LIM zinc-binding domains span residues 4 to 54 (CAGC…CKND) and 63 to 117 (CAGC…CKED). Disordered regions lie at residues 128 to 189 (NSLH…TIKA) and 293 to 374 (YDFF…EVFG). A compositionally biased stretch (low complexity) spans 137–148 (SDPSLSPDSQDP). Positions 151-167 (DDAKDSESANVSDKEGG) are enriched in basic and acidic residues. Phosphoserine is present on Ser-162. Residues 180-239 (RRGPRTTIKAKQLETLKAAFAATPKPTRHIREQLAQETGLNMRVIQVWFQNRRSKERRMK) constitute a DNA-binding region (homeobox). Positions 315-327 (PSSGPSGTPLGGL) are enriched in low complexity. Positions 352-362 (GDSPSPEPSLP) are enriched in pro residues.

Interacts with LDB1 via the tandem LIM domains.

It is found in the nucleus. In terms of biological role, potential transcription factor. May play a role in early mesoderm formation and later in lateral mesoderm differentiation and neurogenesis. This chain is LIM/homeobox protein Lhx1 (LHX1), found in Saimiri boliviensis boliviensis (Bolivian squirrel monkey).